Here is a 529-residue protein sequence, read N- to C-terminus: Peptide chain release factor 3 (529 aa).

Residues 11-280 enclose the tr-type G domain; the sequence is SKRRTFAIIS…GLVAWAPAPM (270 aa). GTP-binding positions include 20–27, 88–92, and 142–145; these read SHPDAGKT, DTPGH, and NKLD.

This sequence belongs to the TRAFAC class translation factor GTPase superfamily. Classic translation factor GTPase family. PrfC subfamily.

The protein resides in the cytoplasm. In terms of biological role, increases the formation of ribosomal termination complexes and stimulates activities of RF-1 and RF-2. It binds guanine nucleotides and has strong preference for UGA stop codons. It may interact directly with the ribosome. The stimulation of RF-1 and RF-2 is significantly reduced by GTP and GDP, but not by GMP. This chain is Peptide chain release factor 3, found in Pectobacterium carotovorum subsp. carotovorum (strain PC1).